Here is a 285-residue protein sequence, read N- to C-terminus: MTNHDLASLSQTIETAFENRDAVNTGTRGAVRDAVEAALNLLDSGKVRVAERAADGTWTVNQWLKKAVLLSFRLNPMELVRGGPGEAVWWDKVASKFDGWSVNEFEKAGFRAVPNCVVRRSAYIAPNAVLMPSFVNLGAYVGEGTMVDTWATVGSCAQIGKNVHLSGGVGIGGVLEPMQAGPTIIEDNCFIGARSEVVEGCIVREGSVLGMGVFIGKSTKIVDRATGEVMYGEVPPYSVVVAGSMPSGSAMGNGQPAPNLYCAVIVKRVDEKTRSKTGINELLRD.

Arginine 111 and aspartate 148 together coordinate substrate.

The protein belongs to the transferase hexapeptide repeat family. Homotrimer.

The protein resides in the cytoplasm. The catalysed reaction is (S)-2,3,4,5-tetrahydrodipicolinate + succinyl-CoA + H2O = (S)-2-succinylamino-6-oxoheptanedioate + CoA. It functions in the pathway amino-acid biosynthesis; L-lysine biosynthesis via DAP pathway; LL-2,6-diaminopimelate from (S)-tetrahydrodipicolinate (succinylase route): step 1/3. In Sinorhizobium medicae (strain WSM419) (Ensifer medicae), this protein is 2,3,4,5-tetrahydropyridine-2,6-dicarboxylate N-succinyltransferase.